Here is a 157-residue protein sequence, read N- to C-terminus: 2-C-methyl-D-erythritol 2,4-cyclodiphosphate synthase (157 aa).

A divalent metal cation contacts are provided by aspartate 8 and histidine 10. 4-CDP-2-C-methyl-D-erythritol 2-phosphate contacts are provided by residues 8 to 10 and 34 to 35; these read DVH and HS. Histidine 42 lines the a divalent metal cation pocket. 4-CDP-2-C-methyl-D-erythritol 2-phosphate-binding positions include 56 to 58, 61 to 65, 100 to 106, 132 to 135, phenylalanine 139, and arginine 142; these read DIG, FPDTD, AQAPKMA, and TTTE.

The protein belongs to the IspF family. In terms of assembly, homotrimer. A divalent metal cation serves as cofactor.

It carries out the reaction 4-CDP-2-C-methyl-D-erythritol 2-phosphate = 2-C-methyl-D-erythritol 2,4-cyclic diphosphate + CMP. It functions in the pathway isoprenoid biosynthesis; isopentenyl diphosphate biosynthesis via DXP pathway; isopentenyl diphosphate from 1-deoxy-D-xylulose 5-phosphate: step 4/6. In terms of biological role, involved in the biosynthesis of isopentenyl diphosphate (IPP) and dimethylallyl diphosphate (DMAPP), two major building blocks of isoprenoid compounds. Catalyzes the conversion of 4-diphosphocytidyl-2-C-methyl-D-erythritol 2-phosphate (CDP-ME2P) to 2-C-methyl-D-erythritol 2,4-cyclodiphosphate (ME-CPP) with a corresponding release of cytidine 5-monophosphate (CMP). The sequence is that of 2-C-methyl-D-erythritol 2,4-cyclodiphosphate synthase from Pseudomonas syringae pv. syringae (strain B728a).